A 141-amino-acid polypeptide reads, in one-letter code: Nucleoside diphosphate kinase (141 aa).

Lys9, Phe57, Arg85, Thr91, Arg102, and Asn112 together coordinate ATP. His115 (pros-phosphohistidine intermediate) is an active-site residue.

This sequence belongs to the NDK family. As to quaternary structure, homotetramer. Mg(2+) is required as a cofactor.

Its subcellular location is the cytoplasm. It catalyses the reaction a 2'-deoxyribonucleoside 5'-diphosphate + ATP = a 2'-deoxyribonucleoside 5'-triphosphate + ADP. The catalysed reaction is a ribonucleoside 5'-diphosphate + ATP = a ribonucleoside 5'-triphosphate + ADP. Major role in the synthesis of nucleoside triphosphates other than ATP. The ATP gamma phosphate is transferred to the NDP beta phosphate via a ping-pong mechanism, using a phosphorylated active-site intermediate. The chain is Nucleoside diphosphate kinase from Chlamydia abortus (strain DSM 27085 / S26/3) (Chlamydophila abortus).